The sequence spans 301 residues: Transcriptional activator FeaR (301 aa).

Residues 199-299 (QKVVTLIDDN…GMTPGEYRRK (101 aa)) form the HTH araC/xylS-type domain. 2 consecutive DNA-binding regions (H-T-H motif) follow at residues 217-238 (EWIA…ADKG) and 266-289 (LAGI…KQRF).

Functionally, positive regulator of tynA/maoA and feaB/padA, the genes for 2-phenylethylamine catabolism. The sequence is that of Transcriptional activator FeaR (feaR) from Escherichia coli (strain K12).